The following is a 497-amino-acid chain: Glucose-6-phosphate 1-dehydrogenase (497 aa).

Residues 15-22 (GASGDLSK), Arg-49, and Lys-153 each bind NADP(+). D-glucose 6-phosphate is bound by residues Lys-153, 183–187 (HYLGK), Glu-221, and Asp-240. His-245 (proton acceptor) is an active-site residue. NADP(+) is bound at residue Arg-336. Residue Lys-339 participates in D-glucose 6-phosphate binding. NADP(+) contacts are provided by Lys-345, Arg-349, and Arg-371. A D-glucose 6-phosphate-binding site is contributed by Gln-373. Residues 379-381 (YLK), 399-401 (DLT), and Arg-466 contribute to the NADP(+) site.

This sequence belongs to the glucose-6-phosphate dehydrogenase family.

The catalysed reaction is D-glucose 6-phosphate + NADP(+) = 6-phospho-D-glucono-1,5-lactone + NADPH + H(+). It participates in carbohydrate degradation; pentose phosphate pathway; D-ribulose 5-phosphate from D-glucose 6-phosphate (oxidative stage): step 1/3. Its function is as follows. Catalyzes the rate-limiting step of the oxidative pentose-phosphate pathway, which represents a route for the dissimilation of carbohydrates besides glycolysis. The main function of this enzyme is to provide reducing power (NADPH) and pentose phosphates for fatty acid and nucleic acid synthesis. This chain is Glucose-6-phosphate 1-dehydrogenase (ZWF), found in Kluyveromyces lactis (strain ATCC 8585 / CBS 2359 / DSM 70799 / NBRC 1267 / NRRL Y-1140 / WM37) (Yeast).